The following is a 658-amino-acid chain: Secretin XcpQ (658 aa).

Residues 1-34 (MSQPLLRALFAPSSRSYVPAVLLSLALGIQAAHA) form the signal peptide. An N0 region spans residues 51-141 (AHWTINLKDA…TEAGGGQSAP (91 aa)). Residues 142–205 (DRLETRVIQV…DVIRQLDQKG (64 aa)) are N1. The interval 206–279 (SHDYSVINLR…SLDTPTARSA (74 aa)) is N2. The tract at residues 280 to 365 (NTRVIRLRHN…VPRAQVLVEA (86 aa)) is N3. The disordered stretch occupies residues 302 to 322 (SEGMKNNGGQGGEQTGGGRPS). Residues 307–320 (NNGGQGGEQTGGGR) are compositionally biased toward gly residues. The interval 368–606 (VEISGDIQDA…VFLRPTVVRD (239 aa)) is secretin. Residues 608 to 658 (AGLAALSGKKYSDIRVIDGTRGPEGRPSILPTNANQLFDGQAVDLRELMTE) form a s domain region.

The protein belongs to the bacterial secretin family. GSP D subfamily. Forms a cylindrical channel with 15 subunits. The closed pentadecameric channel is 170 Angstroms long and 140 Angstroms in diameter.

Its subcellular location is the cell outer membrane. Functionally, involved in a type II secretion system (T2SS, formerly general secretion pathway, GSP) for the export of proteins. This subunit forms the outer membrane channel. Among its substrates are PrpL, elastase LasB, chitin binding protein D (CbpD), aminopeptidase PaAP, and metalloprotease ImpA. This is Secretin XcpQ from Pseudomonas aeruginosa (strain ATCC 15692 / DSM 22644 / CIP 104116 / JCM 14847 / LMG 12228 / 1C / PRS 101 / PAO1).